An 876-amino-acid chain; its full sequence is MSSITSETGKRRVKRTYEVTRQNDNAVRIEPSSLGEEEDKEAKDKNSALQLKRSRYDPNKVFSNTNQGPEKNNLKGEQLGSQKKSSKYDEKITSNNELTTKKGLLGDSENETKYASSNSKFNVEVTHKIKNAKEIDKINRQRMWEEQQLRNAMAGQSDHPDDITLEGSDKYDYVFDTDAMIDYTNEEDDLLPEEKLQYEARLAQALETEEKRILTIQEARKLLPVHQYKDELLQEIKKNQVLIIMGETGSGKTTQLPQYLVEDGFTDQGKLQIAITQPRRVAATSVAARVADEMNVVLGKEVGYQIRFEDKTTPNKTVLKYMTDGMLLREFLTDSKLSKYSCIMIDEAHERTLATDILIGLLKDILPQRPTLKLLISSATMNAKKFSEFFDNCPIFNVPGRRYPVDIHYTLQPEANYIHAAITTIFQIHTTQSLPGDILVFLTGQEEIERTKTKLEEIMSKLGSRTKQMIITPIYANLPQEQQLKIFQPTPENCRKVVLATNIAETSLTIDGIRYVIDPGFVKENSYVPSTGMTQLLTVPCSRASVDQRAGRAGRVGPGKCFRIFTKWSYLHELELMPKPEITRTNLSNTVLLLLSLGVTDLIKFPLMDKPSIPTLRKSLENLYILGALNSKGTITRLGKMMCEFPCEPEFAKVLYTAATHEQCQGVLEECLTIVSMLHETPSLFIGQKRDAAASVLSEVESDHILYLEIFNQWRNSKFSRSWCQDHKIQFKTMLRVRNIRNQLFRCSEKVGLVEKNDQARMKIGNIAGYINARITRCFISGFPMNIVQLGPTGYQTMGRSSGGLNVSVHPTSILFVNHKEKAQRPSKYVLYQQLMLTSKEFIRDCLVIPKEEWLIDMVPQIFKDLIDDKTNRGRR.

The disordered stretch occupies residues 1–111 (MSSITSETGK…KGLLGDSENE (111 aa)). Ser-2 carries the post-translational modification N-acetylserine. Positions 61–70 (VFSNTNQGPE) are enriched in polar residues. A Helicase ATP-binding domain is found at 233-399 (LQEIKKNQVL…FDNCPIFNVP (167 aa)). 246 to 253 (GETGSGKT) serves as a coordination point for ATP. Positions 346 to 349 (DEAH) match the DEAH box motif. One can recognise a Helicase C-terminal domain in the interval 424–598 (TIFQIHTTQS…NTVLLLLSLG (175 aa)).

This sequence belongs to the DEAD box helicase family. DEAH subfamily. Interacts directly with pre-mRNA. According to PubMed:2251118, associated with spliceosomes prior to and throughout step 1 of the splicing reaction. According to PubMed:8943336, it leaves the spliceosome before reaction 1. Interacts with SPP2.

The protein localises to the nucleus. The catalysed reaction is ATP + H2O = ADP + phosphate + H(+). In terms of biological role, involved in pre-mRNA splicing. Is required together with ATP and at least one other factor, for the first cleavage-ligation reaction. Functions as a molecular motor in the activation of the precatalytic spliceosome for the first transesterification reaction of pre-mRNA splicing by hydrolyzing ATP to cause the activation of the spliceosome without the occurrence of splicing. Capable of hydrolyzing nucleoside triphosphates in the presence of single-stranded RNAs such as poly(U). The sequence is that of Pre-mRNA-splicing factor ATP-dependent RNA helicase-like protein PRP2 (PRP2) from Saccharomyces cerevisiae (strain ATCC 204508 / S288c) (Baker's yeast).